Here is a 280-residue protein sequence, read N- to C-terminus: Probable protein VP2 (280 aa).

2 disordered regions span residues 46–167 and 200–280; these read LGAG…FFTS and AQLS…TYSN. The span at 65–81 shows a compositional bias: pro residues; the sequence is PEGPGGPPQHAPPNPPP. A compositionally biased stretch (gly residues) spans 90–100; that stretch reads RGGGAGGAGDG. Residues 106–117 are compositionally biased toward acidic residues; it reads DAAEEYGPEDLD. Residues 227 to 251 show a composition bias toward basic residues; it reads AKTRRRVKKKPLSSKNKHTKKKKRS. Residues 252 to 266 are compositionally biased toward low complexity; the sequence is YSSSSPSSKDNTSES.

Post-translationally, phosphorylated at C-terminal serines.

The chain is Probable protein VP2 from Homo sapiens (Human).